Consider the following 442-residue polypeptide: Lipoyl synthase, apicoplast (442 aa).

The first 25 residues, 1 to 25 (MHVLTPSLYIYAFFIVCVRLKCGRS), serve as a signal peptide directing secretion. Positions 92 to 154 (LLRSESATDE…EKKPDWFHVP (63 aa)) are disordered. The segment covering 109-127 (LKEKLKESPANWGKDKQEE) has biased composition (basic and acidic residues). The [4Fe-4S] cluster site is built by C177, C182, C188, C203, C207, C210, and S418. The Radical SAM core domain occupies 189–407 (WNIGTATIML…KEEGMKMGFK (219 aa)).

It belongs to the radical SAM superfamily. Lipoyl synthase family. [4Fe-4S] cluster is required as a cofactor.

The protein resides in the plastid. Its subcellular location is the apicoplast. The enzyme catalyses [[Fe-S] cluster scaffold protein carrying a second [4Fe-4S](2+) cluster] + N(6)-octanoyl-L-lysyl-[protein] + 2 oxidized [2Fe-2S]-[ferredoxin] + 2 S-adenosyl-L-methionine + 4 H(+) = [[Fe-S] cluster scaffold protein] + N(6)-[(R)-dihydrolipoyl]-L-lysyl-[protein] + 4 Fe(3+) + 2 hydrogen sulfide + 2 5'-deoxyadenosine + 2 L-methionine + 2 reduced [2Fe-2S]-[ferredoxin]. It participates in protein modification; protein lipoylation via endogenous pathway; protein N(6)-(lipoyl)lysine from octanoyl-[acyl-carrier-protein]: step 2/2. Functionally, catalyzes the radical-mediated insertion of two sulfur atoms into the C-6 and C-8 positions of the octanoyl moiety bound to the lipoyl domains of lipoate-dependent enzymes, thereby converting the octanoylated domains into lipoylated derivatives. In Plasmodium vivax (strain Salvador I), this protein is Lipoyl synthase, apicoplast.